Consider the following 294-residue polypeptide: S-methyl-5'-thioadenosine phosphorylase (294 aa).

Phosphate is bound by residues S16, 58 to 59 (RH), and 91 to 92 (SA). A substrate-binding site is contributed by M189. T190 is a phosphate binding site. Residue 213–215 (DFD) participates in substrate binding.

Belongs to the PNP/MTAP phosphorylase family. MTAP subfamily. Homohexamer. Dimer of a homotrimer.

The enzyme catalyses S-methyl-5'-thioadenosine + phosphate = 5-(methylsulfanyl)-alpha-D-ribose 1-phosphate + adenine. It catalyses the reaction 5'-deoxyadenosine + phosphate = 5-deoxy-alpha-D-ribose 1-phosphate + adenine. Its pathway is amino-acid biosynthesis; L-methionine biosynthesis via salvage pathway; S-methyl-5-thio-alpha-D-ribose 1-phosphate from S-methyl-5'-thioadenosine (phosphorylase route): step 1/1. Functionally, catalyzes the reversible phosphorylation of S-methyl-5'-thioadenosine (MTA) to adenine and 5-methylthioribose-1-phosphate. Involved in the breakdown of MTA, a major by-product of polyamine biosynthesis. Responsible for the first step in the methionine salvage pathway after MTA has been generated from S-adenosylmethionine. Has broad substrate specificity with 6-aminopurine nucleosides as preferred substrates. Also catalyzes the phosphorylation of 5'-deoxyadenosine (5'dAdo) to 5-deoxyribose 1-phosphate. Part of a bifunctional DHAP-shunt salvage pathway for SAM by-products. This Rhodospirillum rubrum (strain ATCC 11170 / ATH 1.1.1 / DSM 467 / LMG 4362 / NCIMB 8255 / S1) protein is S-methyl-5'-thioadenosine phosphorylase.